The following is a 383-amino-acid chain: MSAPLKNSDPVTVDVALGDRSYDIVIGRGILPSLGERIAALRPGARVAIVTDEYVATHWLRATEASLLGAGIATSRIVVDEGEVSKSYEGIEFVCEELIKARIERNDLVVALGGGVVGDLAGFAAAIVRRGVDFVQVPTSLLAQVDSSVGGKTGINSPQGKNLVGAFHQPILVVADTAVLDTLSPRQFRAGYAEVAKYGLLGDEAFFAWLETNHADIVKGSAARESAVAASCRAKAAIVARDERETGERALLNLGHTFGHALETATGFSDRLYHGEGVSIGMVLAAELSAQLGMIADADVARIRRHLATAGLPTRLQDIAGFRQEGLADADGLMALMAQDKKVKRGRLTFILLQAIGQAVVSSDVEPSTVRDFLARKLADAPA.

Residues 81-86 (EGEVSK), 115-119 (GVVGD), 139-140 (TS), Lys-152, and Lys-161 each bind NAD(+). 3 residues coordinate Zn(2+): Glu-194, His-256, and His-274.

Belongs to the sugar phosphate cyclases superfamily. Dehydroquinate synthase family. Co(2+) is required as a cofactor. The cofactor is Zn(2+). Requires NAD(+) as cofactor.

It is found in the cytoplasm. The enzyme catalyses 7-phospho-2-dehydro-3-deoxy-D-arabino-heptonate = 3-dehydroquinate + phosphate. It functions in the pathway metabolic intermediate biosynthesis; chorismate biosynthesis; chorismate from D-erythrose 4-phosphate and phosphoenolpyruvate: step 2/7. Functionally, catalyzes the conversion of 3-deoxy-D-arabino-heptulosonate 7-phosphate (DAHP) to dehydroquinate (DHQ). The protein is 3-dehydroquinate synthase of Nitrobacter hamburgensis (strain DSM 10229 / NCIMB 13809 / X14).